The chain runs to 306 residues: ADP-polyphosphate phosphotransferase 2 (306 aa).

Belongs to the polyphosphate kinase 2 (PPK2) family. Class I subfamily.

The enzyme catalyses [phosphate](n) + ATP = [phosphate](n+1) + ADP. It catalyses the reaction [phosphate](n) + GTP = [phosphate](n+1) + GDP. Its function is as follows. Uses inorganic polyphosphate (polyP) as a donor to convert ADP to ATP. Can also convert GDP to GTP, with lower efficiency. This chain is ADP-polyphosphate phosphotransferase 2, found in Rhizobium meliloti (strain 1021) (Ensifer meliloti).